The chain runs to 430 residues: Adenylosuccinate synthetase (430 aa).

GTP-binding positions include Gly13–Lys19 and Gly41–Thr43. Asp14 serves as the catalytic Proton acceptor. Residues Asp14 and Gly41 each coordinate Mg(2+). Residues Asp14–Lys17, Asn39–His42, Thr130, Arg144, Gln225, Thr240, and Arg304 each bind IMP. The active-site Proton donor is the His42. Substrate is bound at residue Ala300–Arg306. GTP is bound by residues Arg306, Lys332 to Asp334, and Ser414 to Gly416.

It belongs to the adenylosuccinate synthetase family. As to quaternary structure, homodimer. Requires Mg(2+) as cofactor.

It is found in the cytoplasm. It carries out the reaction IMP + L-aspartate + GTP = N(6)-(1,2-dicarboxyethyl)-AMP + GDP + phosphate + 2 H(+). The protein operates within purine metabolism; AMP biosynthesis via de novo pathway; AMP from IMP: step 1/2. In terms of biological role, plays an important role in the de novo pathway of purine nucleotide biosynthesis. Catalyzes the first committed step in the biosynthesis of AMP from IMP. This chain is Adenylosuccinate synthetase, found in Xanthomonas oryzae pv. oryzae (strain MAFF 311018).